A 239-amino-acid polypeptide reads, in one-letter code: Uridylate kinase (239 aa).

10–13 (KISG) serves as a coordination point for ATP. The involved in allosteric activation by GTP stretch occupies residues 18 to 23 (GEAGFG). Gly52 contacts UMP. Residues Gly53 and Arg57 each coordinate ATP. Residues Asp72 and 133 to 140 (TGNPYFST) each bind UMP. Residues Asn161, Tyr167, and Asp170 each coordinate ATP.

Belongs to the UMP kinase family. As to quaternary structure, homohexamer.

The protein localises to the cytoplasm. It catalyses the reaction UMP + ATP = UDP + ADP. It participates in pyrimidine metabolism; CTP biosynthesis via de novo pathway; UDP from UMP (UMPK route): step 1/1. With respect to regulation, allosterically activated by GTP. Inhibited by UTP. Its function is as follows. Catalyzes the reversible phosphorylation of UMP to UDP. This Lacticaseibacillus paracasei (strain ATCC 334 / BCRC 17002 / CCUG 31169 / CIP 107868 / KCTC 3260 / NRRL B-441) (Lactobacillus paracasei) protein is Uridylate kinase.